A 277-amino-acid chain; its full sequence is Large ribosomal subunit protein uL2 (277 aa).

Positions 222-277 (GSVMNPNDHPHGGGEGKAPVGRKAPSTPWGKPALGLKTRNKKAKSDKLIVRRRNQK) are disordered.

The protein belongs to the universal ribosomal protein uL2 family. As to quaternary structure, part of the 50S ribosomal subunit. Forms a bridge to the 30S subunit in the 70S ribosome.

In terms of biological role, one of the primary rRNA binding proteins. Required for association of the 30S and 50S subunits to form the 70S ribosome, for tRNA binding and peptide bond formation. It has been suggested to have peptidyltransferase activity; this is somewhat controversial. Makes several contacts with the 16S rRNA in the 70S ribosome. The chain is Large ribosomal subunit protein uL2 from Streptococcus agalactiae serotype Ia (strain ATCC 27591 / A909 / CDC SS700).